An 81-amino-acid polypeptide reads, in one-letter code: uncharacterized protein (81 aa).

A run of 2 helical transmembrane segments spans residues 4–24 and 61–81; these read IFKMSFAVIIIILALIAFNYT and NIYTAVFVWSVSLIGFTLHII.

The protein localises to the cell membrane. This is an uncharacterized protein from Bacillus subtilis (strain 168).